The following is a 204-amino-acid chain: Isochorismatase domain-containing protein 2 (204 aa).

It belongs to the isochorismatase family. Interacts with CDKN2A.

The protein resides in the cytoplasm. Its subcellular location is the nucleus. The polypeptide is Isochorismatase domain-containing protein 2 (ISOC2) (Bos taurus (Bovine)).